Here is a 143-residue protein sequence, read N- to C-terminus: Zinc-containing ferredoxin (143 aa).

Positions 13–60 are N-terminal extension; that stretch reads PIDEHFLENDKDYPVTGQHNGHDVRAEGMQRLDADGKPYPTKLGIHGT. Positions 31, 34, and 58 each coordinate Zn(2+). 2 4Fe-4S ferredoxin-type domains span residues 60–89 and 115–143; these read THVA…WNLN and KCDP…KITP. Positions 69 and 75 each coordinate [3Fe-4S] cluster. Residue cysteine 79 participates in [4Fe-4S] cluster binding. Aspartate 117 serves as a coordination point for Zn(2+). [4Fe-4S] cluster is bound by residues cysteine 124, cysteine 127, and cysteine 130. Cysteine 134 lines the [3Fe-4S] cluster pocket.

Requires [3Fe-4S] cluster as cofactor. The cofactor is [4Fe-4S] cluster. Zn(2+) serves as cofactor.

Ferredoxins are iron-sulfur proteins that transfer electrons in a wide variety of metabolic reactions. The chain is Zinc-containing ferredoxin (zfx) from Thermoplasma acidophilum (strain ATCC 25905 / DSM 1728 / JCM 9062 / NBRC 15155 / AMRC-C165).